Reading from the N-terminus, the 551-residue chain is Preprotein translocase subunit SCY1, chloroplastic (551 aa).

Residues 1–67 constitute a chloroplast transit peptide; sequence MITVSEVSSY…WNLGLVINSR (67 aa). 10 helical membrane-spanning segments follow: residues 142 to 162, 192 to 212, 241 to 261, 268 to 288, 295 to 315, 328 to 348, 382 to 402, 415 to 435, 482 to 502, and 503 to 523; these read FLKLLGFLALSRLGIYIPLGG, LGICSLGIVPFINAQIVFQLL, ASVGFAIVQAIGQVFYLRPYV, WVVSSVTLLTLGSVLTTYIGE, LGNGTSLLIFTSIISYLPASF, YTGLGTIVVSFLLLVLGIVYV, SAGVMPIIFSTSSLALPATLA, FALTPGGSFYLPTNILLIAFF, VLGSAFLAVLAAGPAVVEQIT, and HLTAFRGFAGTSVLILVGCAT.

The protein belongs to the SecY/SEC61-alpha family. Part of the Sec protein translocation apparatus. Interacts with SECE1, ALB3 and probably with SECA1.

The protein resides in the plastid. It localises to the chloroplast thylakoid membrane. In terms of biological role, involved in protein export. Probably interacts with other proteins to allow the translocation of proteins across the chloroplast thylakoid membranes. Required for normal greening during embryogenesis. Central subunit of the protein translocation channel SecYE. Consists of two halves formed by TMs 1-5 and 6-10. These two domains form a lateral gate at the front which open onto the bilayer between TMs 2 and 7, and are clamped together by SecE at the back. The channel is closed by both a pore ring composed of hydrophobic SecY resides and a short helix (helix 2A) on the extracellular side of the membrane which forms a plug. This Arabidopsis thaliana (Mouse-ear cress) protein is Preprotein translocase subunit SCY1, chloroplastic (SCY1).